The following is a 431-amino-acid chain: tRNA-2-methylthio-N(6)-dimethylallyladenosine synthase (431 aa).

In terms of domain architecture, MTTase N-terminal spans 2-117 (KKLFIETLGC…ITEVVDKKHA (116 aa)). [4Fe-4S] cluster contacts are provided by cysteine 11, cysteine 48, cysteine 80, cysteine 149, cysteine 153, and cysteine 156. The 234-residue stretch at 135–368 (RTNPFKAMVN…QTRHTEILDE (234 aa)) folds into the Radical SAM core domain. The region spanning 371–431 (DAQLGKVHEV…SRGALDGVLV (61 aa)) is the TRAM domain.

Belongs to the methylthiotransferase family. MiaB subfamily. As to quaternary structure, monomer. It depends on [4Fe-4S] cluster as a cofactor.

The protein resides in the cytoplasm. The enzyme catalyses N(6)-dimethylallyladenosine(37) in tRNA + (sulfur carrier)-SH + AH2 + 2 S-adenosyl-L-methionine = 2-methylsulfanyl-N(6)-dimethylallyladenosine(37) in tRNA + (sulfur carrier)-H + 5'-deoxyadenosine + L-methionine + A + S-adenosyl-L-homocysteine + 2 H(+). Functionally, catalyzes the methylthiolation of N6-(dimethylallyl)adenosine (i(6)A), leading to the formation of 2-methylthio-N6-(dimethylallyl)adenosine (ms(2)i(6)A) at position 37 in tRNAs that read codons beginning with uridine. In Sulfurovum sp. (strain NBC37-1), this protein is tRNA-2-methylthio-N(6)-dimethylallyladenosine synthase.